The chain runs to 398 residues: Ornithine aminotransferase (398 aa).

An N6-(pyridoxal phosphate)lysine modification is found at K256.

It belongs to the class-III pyridoxal-phosphate-dependent aminotransferase family. OAT subfamily. It depends on pyridoxal 5'-phosphate as a cofactor.

It localises to the cytoplasm. It catalyses the reaction a 2-oxocarboxylate + L-ornithine = L-glutamate 5-semialdehyde + an L-alpha-amino acid. It participates in amino-acid biosynthesis; L-proline biosynthesis; L-glutamate 5-semialdehyde from L-ornithine: step 1/1. Its function is as follows. Catalyzes the interconversion of ornithine to glutamate semialdehyde. The protein is Ornithine aminotransferase of Oceanobacillus iheyensis (strain DSM 14371 / CIP 107618 / JCM 11309 / KCTC 3954 / HTE831).